A 71-amino-acid polypeptide reads, in one-letter code: Small ribosomal subunit protein bS21 (71 aa).

Positions 48 to 59 (KAAAAVKRHAKK) are enriched in basic residues. Residues 48–71 (KAAAAVKRHAKKVQRENRKFQRLY) form a disordered region. A compositionally biased stretch (basic and acidic residues) spans 60-71 (VQRENRKFQRLY).

This sequence belongs to the bacterial ribosomal protein bS21 family.

The polypeptide is Small ribosomal subunit protein bS21 (Teredinibacter turnerae (strain ATCC 39867 / T7901)).